A 470-amino-acid chain; its full sequence is Argininosuccinate lyase (470 aa).

It belongs to the lyase 1 family. Argininosuccinate lyase subfamily.

Its subcellular location is the cytoplasm. It carries out the reaction 2-(N(omega)-L-arginino)succinate = fumarate + L-arginine. It functions in the pathway amino-acid biosynthesis; L-arginine biosynthesis; L-arginine from L-ornithine and carbamoyl phosphate: step 3/3. The polypeptide is Argininosuccinate lyase (Mycobacterium tuberculosis (strain CDC 1551 / Oshkosh)).